The chain runs to 180 residues: Interleukin-17B (180 aa).

A signal peptide spans 1–20; sequence MDWPHNLLFLLTISIFLGLG. The segment at 22 to 44 is disordered; it reads PRSPKSKRKGQGRPGPLAPGPHQ. Residue N75 is glycosylated (N-linked (GlcNAc...) asparagine). Cystine bridges form between C121–C176 and C126–C178.

This sequence belongs to the IL-17 family. In terms of tissue distribution, expressed in adult pancreas, small intestine, stomach, spinal cord and testis. Less pronounced expression in prostate, colon mucosal lining, and ovary.

The protein resides in the secreted. Its function is as follows. Stimulates the release of tumor necrosis factor alpha and IL-1-beta from the monocytic cell line THP-1. This is Interleukin-17B (IL17B) from Homo sapiens (Human).